A 388-amino-acid chain; its full sequence is Processive diacylglycerol beta-glucosyltransferase (388 aa).

The protein belongs to the glycosyltransferase 28 family. UgtP subfamily.

It is found in the cell membrane. It catalyses the reaction a 1,2-diacyl-3-O-(beta-D-glucopyranosyl)-sn-glycerol + UDP-alpha-D-glucose = a 1,2-diacyl-3-O-(beta-D-Glc-(1-&gt;6)-beta-D-Glc)-sn-glycerol + UDP + H(+). The enzyme catalyses a 1,2-diacyl-3-O-(beta-D-Glc-(1-&gt;6)-beta-D-Glc)-sn-glycerol + UDP-alpha-D-glucose = a 1,2-diacyl-3-O-(beta-D-Glc-(1-&gt;6)-beta-D-Glc-(1-&gt;6)-beta-D-Glc)-sn-glycerol + UDP + H(+). It carries out the reaction a 1,2-diacyl-sn-glycerol + UDP-alpha-D-glucose = a 1,2-diacyl-3-O-(beta-D-glucopyranosyl)-sn-glycerol + UDP + H(+). It participates in glycolipid metabolism; diglucosyl-diacylglycerol biosynthesis. Its function is as follows. Processive glucosyltransferase involved in the biosynthesis of both the bilayer- and non-bilayer-forming membrane glucolipids. Is able to successively transfer up to three glucosyl residues to diacylglycerol (DAG), thereby catalyzing the formation of beta-monoglucosyl-DAG (3-O-(beta-D-glucopyranosyl)-1,2-diacyl-sn-glycerol), beta-diglucosyl-DAG (3-O-(beta-D-glucopyranosyl-beta-(1-&gt;6)-D-glucopyranosyl)-1,2-diacyl-sn-glycerol) and beta-triglucosyl-DAG (3-O-(beta-D-glucopyranosyl-beta-(1-&gt;6)-D-glucopyranosyl-beta-(1-&gt;6)-D-glucopyranosyl)-1,2-diacyl-sn-glycerol). Beta-diglucosyl-DAG is the predominant glycolipid found in Bacillales and is also used as a membrane anchor for lipoteichoic acid (LTA). This Bacillus cereus (strain 03BB102) protein is Processive diacylglycerol beta-glucosyltransferase.